A 346-amino-acid chain; its full sequence is MNCDEIIKKLLLNPVHNTAATRGPAGENCESNQRTYTRISRLAAFQSAQTQESTPKTNGTGRATTEGLTEAEVRWLVMESRALFMSQPMLVEIAAPVRICGDVHGQYTDLLRLFDLGGFPPDANYIFLGDYVDRGDQSLERICLLLAYKLSFPETFFLLRGNHECSSINRIYGFFDECKRRYSVRLWKQFTDTFNCMPVAGLVEGRILCMHGGLSPELTDLDQIRRILRPTDVPDSGLICDLLWSDPSTNMESNWSENDRGVSWTFSESVVKSFNKKFDLDLICRAHQVVDAGYEFFAARQLVTVFSAPNYCDEFDNAGAFMCVDENFMCSFIRIEPTRTLLKYFF.

Positions 46-65 are disordered; it reads QSAQTQESTPKTNGTGRATT. Mn(2+)-binding residues include D102, H104, D130, and N162. The active-site Proton donor is the H163. 2 residues coordinate Mn(2+): H211 and H287.

It belongs to the PPP phosphatase family. PP-1 subfamily. It depends on Mn(2+) as a cofactor.

The catalysed reaction is O-phospho-L-seryl-[protein] + H2O = L-seryl-[protein] + phosphate. It carries out the reaction O-phospho-L-threonyl-[protein] + H2O = L-threonyl-[protein] + phosphate. In Trypanosoma brucei brucei, this protein is Serine/threonine-protein phosphatase PP1(4.8).